The chain runs to 154 residues: Large ribosomal subunit protein uL13 (154 aa).

It belongs to the universal ribosomal protein uL13 family. Part of the 50S ribosomal subunit.

Its function is as follows. This protein is one of the early assembly proteins of the 50S ribosomal subunit, although it is not seen to bind rRNA by itself. It is important during the early stages of 50S assembly. The polypeptide is Large ribosomal subunit protein uL13 (Rhodospirillum rubrum (strain ATCC 11170 / ATH 1.1.1 / DSM 467 / LMG 4362 / NCIMB 8255 / S1)).